A 405-amino-acid chain; its full sequence is L-carnitine CoA-transferase (405 aa).

Lysine 97 and arginine 104 together coordinate CoA. The active-site Nucleophile is aspartate 169.

Belongs to the CoA-transferase III family. CaiB subfamily. Homodimer.

It localises to the cytoplasm. The catalysed reaction is crotonobetainyl-CoA + (R)-carnitine = crotonobetaine + (R)-carnitinyl-CoA. It catalyses the reaction 4-(trimethylamino)butanoyl-CoA + (R)-carnitine = (R)-carnitinyl-CoA + 4-(trimethylamino)butanoate. The protein operates within amine and polyamine metabolism; carnitine metabolism. Its function is as follows. Catalyzes the reversible transfer of the CoA moiety from gamma-butyrobetainyl-CoA to L-carnitine to generate L-carnitinyl-CoA and gamma-butyrobetaine. Is also able to catalyze the reversible transfer of the CoA moiety from gamma-butyrobetainyl-CoA or L-carnitinyl-CoA to crotonobetaine to generate crotonobetainyl-CoA. The polypeptide is L-carnitine CoA-transferase (Escherichia coli O7:K1 (strain IAI39 / ExPEC)).